Reading from the N-terminus, the 331-residue chain is Tryptophan--tRNA ligase (331 aa).

ATP-binding positions include 10–12 and 18–19; these read QPS and GN. A 'HIGH' region motif is present at residues 11 to 19; that stretch reads PSGQLTLGN. Position 133 (aspartate 133) interacts with L-tryptophan. ATP is bound by residues 145-147, valine 184, and 193-197; these read GED and KMSKS. A 'KMSKS' region motif is present at residues 193 to 197; that stretch reads KMSKS.

The protein belongs to the class-I aminoacyl-tRNA synthetase family. In terms of assembly, homodimer.

It is found in the cytoplasm. The catalysed reaction is tRNA(Trp) + L-tryptophan + ATP = L-tryptophyl-tRNA(Trp) + AMP + diphosphate + H(+). Its function is as follows. Catalyzes the attachment of tryptophan to tRNA(Trp). The chain is Tryptophan--tRNA ligase from Listeria monocytogenes serovar 1/2a (strain ATCC BAA-679 / EGD-e).